The primary structure comprises 367 residues: MLNITSQVLAPALNGSVSQSSGCPNTEWSGWLNVIQAPFLWVLFVLATLENLFVLSVFCLHKSSCTVAEVYLGNLAAADLILACGLPFWAVTIANHFDWLFGEALCRVVNTMIYMNLYSSICFLMLVSIDRYLALVKTMSIGRMRRVRWAKLYSLVIWGCTLLLSSPMLVFRTMKDYRDEGYNVTACIIDYPSRSWEVFTNVLLNLVGFLLPLSVITFCTVQILQVLRNNEMQKFKEIQTERRATVLVLAVLLLFVVCWLPFQVSTFLDTLLKLGVLSSCWDEHVIDVITQVGSFMGYSNSCLNPLVYVIVGKRFRKKSREVYRAACPKAGCVLEPVQAESSMGTLRTSISVERQIHKLPEWTRSSQ.

The Extracellular portion of the chain corresponds to 1-36; the sequence is MLNITSQVLAPALNGSVSQSSGCPNTEWSGWLNVIQ. 2 N-linked (GlcNAc...) asparagine glycosylation sites follow: N3 and N14. Residues 37–60 traverse the membrane as a helical segment; it reads APFLWVLFVLATLENLFVLSVFCL. The Cytoplasmic segment spans residues 61-69; sequence HKSSCTVAE. The helical transmembrane segment at 70–94 threads the bilayer; that stretch reads VYLGNLAAADLILACGLPFWAVTIA. Topologically, residues 95–107 are extracellular; it reads NHFDWLFGEALCR. The cysteines at positions 106 and 187 are disulfide-linked. Residues 108 to 129 traverse the membrane as a helical segment; sequence VVNTMIYMNLYSSICFLMLVSI. Topologically, residues 130-151 are cytoplasmic; it reads DRYLALVKTMSIGRMRRVRWAK. Y132 is subject to Phosphotyrosine. The chain crosses the membrane as a helical span at residues 152–174; it reads LYSLVIWGCTLLLSSPMLVFRTM. At 175 to 197 the chain is on the extracellular side; the sequence is KDYRDEGYNVTACIIDYPSRSWE. An N-linked (GlcNAc...) asparagine glycan is attached at N183. A helical membrane pass occupies residues 198 to 224; sequence VFTNVLLNLVGFLLPLSVITFCTVQIL. Topologically, residues 225 to 243 are cytoplasmic; sequence QVLRNNEMQKFKEIQTERR. Residues 244-268 form a helical membrane-spanning segment; that stretch reads ATVLVLAVLLLFVVCWLPFQVSTFL. Residues 269–287 lie on the Extracellular side of the membrane; sequence DTLLKLGVLSSCWDEHVID. The chain crosses the membrane as a helical span at residues 288–311; the sequence is VITQVGSFMGYSNSCLNPLVYVIV. Residues 312-367 lie on the Cytoplasmic side of the membrane; the sequence is GKRFRKKSREVYRAACPKAGCVLEPVQAESSMGTLRTSISVERQIHKLPEWTRSSQ. Y323 carries the phosphotyrosine modification. A lipid anchor (S-palmitoyl cysteine) is attached at C327. At S342 the chain carries Phosphoserine. At T345 the chain carries Phosphothreonine. Phosphoserine; by GRK6 occurs at positions 349 and 351.

This sequence belongs to the G-protein coupled receptor 1 family. Bradykinin receptor subfamily. BDKRB2 sub-subfamily. Forms a complex with PECAM1 and GNAQ. Interacts with PECAM1.

It localises to the cell membrane. Its function is as follows. Receptor for bradykinin. It is associated with G proteins that activate a phosphatidylinositol-calcium second messenger system. In Oryctolagus cuniculus (Rabbit), this protein is B2 bradykinin receptor (BDKRB2).